We begin with the raw amino-acid sequence, 367 residues long: Alpha-2-HS-glycoprotein (367 aa).

The first 18 residues, 1–18, serve as a signal peptide directing secretion; it reads MKSLVLLLCLAQLWGCHS. One can recognise a Cystatin fetuin-A-type 1 domain in the interval 27–133; it reads YRQPNCDDPE…KFSVVYAKCD (107 aa). 6 disulfide bridges follow: Cys-32/Cys-358, Cys-89/Cys-100, Cys-114/Cys-132, Cys-146/Cys-149, Cys-208/Cys-219, and Cys-230/Cys-247. A phosphoserine mark is found at Ser-134, Ser-135, and Ser-138. Residues 144-255 form the Cystatin fetuin-A-type 2 domain; that stretch reads KVCQDCPLLA…TCTVFQTQPV (112 aa). N-linked (GlcNAc...) asparagine glycosylation is found at Asn-156 and Asn-176. The disordered stretch occupies residues 254–301; the sequence is PVTSQPQPEGANETVPTPVVDPDAPPSPPLGAPGLPPAGSPPDSHVLL. N-linked (GlcNAc...) asparagine glycosylation occurs at Asn-265. Pro residues predominate over residues 276-293; the sequence is DAPPSPPLGAPGLPPAGS. The propeptide at 301 to 340 is connecting peptide; sequence LAAPPGHQLHWAHYDLRHTFMGVVSLGSPSGEASHPRKTR. Position 319 is a phosphothreonine (Thr-319). Phosphoserine is present on residues Ser-325, Ser-328, and Ser-330. Thr-339 is a glycosylation site (O-linked (GalNAc...) threonine).

The protein belongs to the fetuin family. Alpha-2-HS glycoprotein derives from this precursor, when the connecting peptide is cleaved off. The two chains A and B are held together by a single disulfide bond. Post-translationally, phosphorylated by FAM20C in the extracellular medium.

The protein localises to the secreted. Its function is as follows. Promotes endocytosis, possesses opsonic properties and influences the mineral phase of bone. Shows affinity for calcium and barium ions. The sequence is that of Alpha-2-HS-glycoprotein (AHSG) from Pan troglodytes (Chimpanzee).